The sequence spans 319 residues: Putative metal ion transporter YfjQ (319 aa).

Helical transmembrane passes span 254–274 (IMMT…IAGV) and 290–310 (GYFA…IWFV).

Belongs to the CorA metal ion transporter (MIT) (TC 1.A.35) family.

Its subcellular location is the cell membrane. In Bacillus subtilis (strain 168), this protein is Putative metal ion transporter YfjQ (yfjQ).